A 129-amino-acid polypeptide reads, in one-letter code: Large ribosomal subunit protein bL20 (129 aa).

This sequence belongs to the bacterial ribosomal protein bL20 family.

Functionally, binds directly to 23S ribosomal RNA and is necessary for the in vitro assembly process of the 50S ribosomal subunit. It is not involved in the protein synthesizing functions of that subunit. The sequence is that of Large ribosomal subunit protein bL20 from Kineococcus radiotolerans (strain ATCC BAA-149 / DSM 14245 / SRS30216).